A 248-amino-acid chain; its full sequence is MILFPAIDLKGGQCVRLKLGDMQQATVYNTDPAAQAKSFEDQGFEWLHVVDLDGAFAGHSANGDAVEAILKATKNPVQLGGGIRTLDHIEAWLSRGLRRVILGTVAVRNPELVIEACRKFPGRVAVGIDAKGGKVAVEGWAEASELGIIELAKKFEGAGVAAIIYTDIDRDGILTGINWSSTLELADAVSIPVIASGGLASLNDIKRMLQPDARKLEGAISGRALYDGRIDPKEALALINANRAKETA.

The active-site Proton acceptor is Asp8. Asp129 functions as the Proton donor in the catalytic mechanism.

It belongs to the HisA/HisF family.

The protein localises to the cytoplasm. It carries out the reaction 1-(5-phospho-beta-D-ribosyl)-5-[(5-phospho-beta-D-ribosylamino)methylideneamino]imidazole-4-carboxamide = 5-[(5-phospho-1-deoxy-D-ribulos-1-ylimino)methylamino]-1-(5-phospho-beta-D-ribosyl)imidazole-4-carboxamide. It participates in amino-acid biosynthesis; L-histidine biosynthesis; L-histidine from 5-phospho-alpha-D-ribose 1-diphosphate: step 4/9. The protein is 1-(5-phosphoribosyl)-5-[(5-phosphoribosylamino)methylideneamino] imidazole-4-carboxamide isomerase of Rhizobium etli (strain ATCC 51251 / DSM 11541 / JCM 21823 / NBRC 15573 / CFN 42).